The following is a 299-amino-acid chain: Protease HtpX homolog (299 aa).

2 helical membrane passes run Leu-19 to Phe-39 and Trp-41 to Tyr-61. His-146 contacts Zn(2+). Residue Glu-147 is part of the active site. A Zn(2+)-binding site is contributed by His-150. 2 helical membrane-spanning segments follow: residues Ile-156–Phe-176 and Ile-198–Ile-218. Position 227 (Glu-227) interacts with Zn(2+).

This sequence belongs to the peptidase M48B family. The cofactor is Zn(2+).

It is found in the cell membrane. This is Protease HtpX homolog from Caldanaerobacter subterraneus subsp. tengcongensis (strain DSM 15242 / JCM 11007 / NBRC 100824 / MB4) (Thermoanaerobacter tengcongensis).